The sequence spans 381 residues: Creatine kinase M-type (381 aa).

A Phosphagen kinase N-terminal domain is found at 11–98 (KLNYKSEEEY…FDPIIQDRHG (88 aa)). A Phosphagen kinase C-terminal domain is found at 125–367 (YVLSSRVRTG…KLMVEMEKKL (243 aa)). 128-132 (SSRVR) serves as a coordination point for ATP. Ser-164 carries the phosphoserine modification. Position 166 is a phosphothreonine (Thr-166). Ser-178 is modified (phosphoserine). Thr-180 carries the phosphothreonine modification. His-191 is an ATP binding site. Ser-199 is subject to Phosphoserine. Residues Arg-236 and Arg-292 each coordinate ATP. 2 positions are modified to phosphothreonine: Thr-313 and Thr-322. 320–325 (RGTGGV) is an ATP binding site. Ser-372 is subject to Phosphoserine.

The protein belongs to the ATP:guanido phosphotransferase family. In terms of assembly, dimer of identical or non-identical chains, which can be either B (brain type) or M (muscle type). With MM being the major form in skeletal muscle and myocardium, MB existing in myocardium, and BB existing in many tissues, especially brain.

It catalyses the reaction creatine + ATP = N-phosphocreatine + ADP + H(+). In terms of biological role, reversibly catalyzes the transfer of phosphate between ATP and various phosphogens (e.g. creatine phosphate). Creatine kinase isoenzymes play a central role in energy transduction in tissues with large, fluctuating energy demands, such as skeletal muscle, heart, brain and spermatozoa. The chain is Creatine kinase M-type (CKM) from Oryctolagus cuniculus (Rabbit).